A 132-amino-acid polypeptide reads, in one-letter code: Small ribosomal subunit protein uS9 (132 aa).

Belongs to the universal ribosomal protein uS9 family.

The polypeptide is Small ribosomal subunit protein uS9 (rps9) (Halobacterium salinarum (strain ATCC 700922 / JCM 11081 / NRC-1) (Halobacterium halobium)).